Reading from the N-terminus, the 170-residue chain is Flavodoxin (170 aa).

A Flavodoxin-like domain is found at 4–165; it reads IGLFFGTQTG…RIQAWVAQLK (162 aa).

It belongs to the flavodoxin family. The cofactor is FMN.

Low-potential electron donor to a number of redox enzymes. In Picosynechococcus sp. (strain ATCC 27264 / PCC 7002 / PR-6) (Agmenellum quadruplicatum), this protein is Flavodoxin (isiB).